The primary structure comprises 507 residues: Glutamyl-tRNA(Gln) amidotransferase subunit A, mitochondrial (507 aa).

Active-site charge relay system residues include lysine 79 and serine 160. Residue serine 184 is the Acyl-ester intermediate of the active site.

The protein belongs to the amidase family. GatA subfamily. As to quaternary structure, subunit of the heterotrimeric GatCAB amidotransferase (AdT) complex, composed of A, B and C subunits.

The protein resides in the mitochondrion. The catalysed reaction is L-glutamyl-tRNA(Gln) + L-glutamine + ATP + H2O = L-glutaminyl-tRNA(Gln) + L-glutamate + ADP + phosphate + H(+). Functionally, allows the formation of correctly charged Gln-tRNA(Gln) through the transamidation of misacylated Glu-tRNA(Gln) in the mitochondria. The reaction takes place in the presence of glutamine and ATP through an activated gamma-phospho-Glu-tRNA(Gln). In Drosophila pseudoobscura pseudoobscura (Fruit fly), this protein is Glutamyl-tRNA(Gln) amidotransferase subunit A, mitochondrial.